The primary structure comprises 149 residues: Transcriptional repressor NrdR (149 aa).

The segment at 3–34 (CPFCSHQETQVVETRVSEDGDFIRRRRQCGAC) is a zinc-finger region. The 91-residue stretch at 49-139 (PTVVKKDGRR…VYRSFEDIDE (91 aa)) folds into the ATP-cone domain.

This sequence belongs to the NrdR family. It depends on Zn(2+) as a cofactor.

Functionally, negatively regulates transcription of bacterial ribonucleotide reductase nrd genes and operons by binding to NrdR-boxes. The polypeptide is Transcriptional repressor NrdR (Acidovorax sp. (strain JS42)).